Consider the following 572-residue polypeptide: Probable lysosomal cobalamin transporter (572 aa).

Helical transmembrane passes span 8–28, 40–60, 95–115, 145–165, 188–208, 314–334, 374–394, 421–441, and 499–519; these read VIWF…SVFI, FVTF…MLLP, IIYY…IPFA, TLTF…APMM, AFTF…AFYT, GGFC…MTVV, IIFA…VVAV, AVLT…LVPG, and VALN…LFLA. Residues 522–544 are disordered; it reads GRRRGRGRESVSKHQKKRQSYMR.

This sequence belongs to the LIMR family. LMBRD1 subfamily.

The protein resides in the lysosome membrane. Probable lysosomal cobalamin transporter. Required to export cobalamin from lysosomes allowing its conversion to cofactors. This Aspergillus fumigatus (strain ATCC MYA-4609 / CBS 101355 / FGSC A1100 / Af293) (Neosartorya fumigata) protein is Probable lysosomal cobalamin transporter.